The chain runs to 287 residues: MAADAHAPTASEYIVHHLQHLQNIKQKSIIDFSVVNLDSVAVSVILGVLGLFVMWLAARTATSGVPSRFQAAVEMLVEMVDNQAKANIHNAQSRKFIAPLALTVFVWIFLMNAMDLLPVDLLPVLWQVATGDSHAYLRVVPTADLSTTLGLSSAVLILCFVYSIKIKGLGGWAHELVTAPFGTSKNPVFALILGVVNLLMQIIEYVAKTVSHGMRLFGNMYAGELVFMLIALMGGAAAMSLSGVLLPVGHIIAGSIWAIFHILIITLQAFIFMMLTLIYLGQAHEAH.

A run of 6 helical transmembrane segments spans residues 37-57 (LDSV…MWLA), 96-116 (FIAP…AMDL), 149-169 (LGLS…IKGL), 187-207 (PVFA…EYVA), 224-244 (ELVF…LSGV), and 266-286 (TLQA…AHEA).

This sequence belongs to the ATPase A chain family. In terms of assembly, F-type ATPases have 2 components, CF(1) - the catalytic core - and CF(0) - the membrane proton channel. CF(1) has five subunits: alpha(3), beta(3), gamma(1), delta(1), epsilon(1). CF(0) has three main subunits: a(1), b(2) and c(9-12). The alpha and beta chains form an alternating ring which encloses part of the gamma chain. CF(1) is attached to CF(0) by a central stalk formed by the gamma and epsilon chains, while a peripheral stalk is formed by the delta and b chains.

It is found in the cell inner membrane. Functionally, key component of the proton channel; it plays a direct role in the translocation of protons across the membrane. This Acidovorax sp. (strain JS42) protein is ATP synthase subunit a.